The sequence spans 161 residues: 18.1 kDa class I heat shock protein (161 aa).

The region spanning 45–160 (DVAAFTNARV…QVKSIDISGA (116 aa)) is the sHSP domain.

It belongs to the small heat shock protein (HSP20) family. As to quaternary structure, may form oligomeric structures. Binds to AKR2A.

The protein resides in the cytoplasm. The polypeptide is 18.1 kDa class I heat shock protein (HSP18.1) (Arabidopsis thaliana (Mouse-ear cress)).